A 574-amino-acid chain; its full sequence is Sulfate adenylyltransferase (574 aa).

The N-terminal stretch occupies residues 1 to 170 (MANPPHGGVL…VEAIDRLEHY (170 aa)). Residues 171–395 (DYVGLRYTPA…LRESHPPRNQ (225 aa)) are catalytic. Gln198 contributes to the sulfate binding site. ATP contacts are provided by residues 198–201 (QTRN) and 292–295 (GRDH). Active-site residues include Thr199, Arg200, and Asn201. Residue Arg200 coordinates sulfate. Ala296 provides a ligand contact to sulfate. Residue Met334 coordinates ATP. An allosteric regulation domain; adenylyl-sulfate kinase-like region spans residues 396–574 (QGFTVFLTGY…LESQGLLTQL (179 aa)). Residues 435–438 (ETVR), Arg452, 478–479 (IA), and Arg516 contribute to the 3'-phosphoadenylyl sulfate site.

This sequence in the N-terminal section; belongs to the sulfate adenylyltransferase family. The protein in the C-terminal section; belongs to the APS kinase family. Homohexamer. Dimer of trimers.

The protein localises to the cytoplasm. The enzyme catalyses sulfate + ATP + H(+) = adenosine 5'-phosphosulfate + diphosphate. The protein operates within sulfur metabolism; hydrogen sulfide biosynthesis; sulfite from sulfate: step 1/3. Its activity is regulated as follows. Allosterically inhibited by 3'-phosphoadenosine 5'-phosphosulfate (PAPS). Functionally, catalyzes the first intracellular reaction of sulfate assimilation, forming adenosine-5'-phosphosulfate (APS) from inorganic sulfate and ATP. Plays an important role in sulfate activation as a component of the biosynthesis pathway of sulfur-containing amino acids. The protein is Sulfate adenylyltransferase of Phaeosphaeria nodorum (strain SN15 / ATCC MYA-4574 / FGSC 10173) (Glume blotch fungus).